Here is a 681-residue protein sequence, read N- to C-terminus: Sodium-dependent phosphate transporter 1 (681 aa).

6 helical membrane-spanning segments follow: residues 25–45 (NLWM…SVGA), 66–86 (ACIL…AKVS), 106–126 (LMAG…VASF), 162–182 (IVMS…ILFF), 201–221 (ALPI…MYTG), and 234–254 (GTIL…WFFV). The tract at residues 266 to 295 (VKSSPSESPLMEKKNNLKDHEETKMAPGDV) is disordered. A phosphoserine mark is found at Ser269 and Ser273. Over residues 275–289 (LMEKKNNLKDHEETK) the composition is skewed to basic and acidic residues. 4 helical membrane passes run 513 to 533 (VSLL…FAHG), 561 to 581 (ATPI…LWVW), 602 to 622 (FSIE…GLPI), and 652 to 672 (IFMA…AIMA).

Belongs to the inorganic phosphate transporter (PiT) (TC 2.A.20) family. As to expression, ubiquitously expressed.

The protein resides in the cell membrane. The catalysed reaction is 2 Na(+)(out) + phosphate(out) = 2 Na(+)(in) + phosphate(in). Functionally, sodium-phosphate symporter which preferentially transports the monovalent form of phosphate with a stoichiometry of two sodium ions per phosphate ion. May play a role in extracellular matrix and cartilage calcification as well as in vascular calcification. Essential for cell proliferation but this function is independent of its phosphate transporter activity. This Rattus norvegicus (Rat) protein is Sodium-dependent phosphate transporter 1 (Slc20a1).